The following is a 187-amino-acid chain: Protein ECM23 (187 aa).

2 disordered regions span residues 106–127 (GKKSLAGYRPKSRKKQTILPNG) and 167–187 (KKIRSQQSSDDGTKNFIFKNK). The GATA-type zinc finger occupies 126–180 (NGQPKECATCGDTWTSQWRSGPNGNVELCSRCGIAYRKKMEKKIRSQQSSDDGTK).

Its function is as follows. Involved in morphogenesis. May be involved in cell wall organization and biogenesis. This is Protein ECM23 (ECM23) from Saccharomyces cerevisiae (strain ATCC 204508 / S288c) (Baker's yeast).